Here is a 251-residue protein sequence, read N- to C-terminus: Probable transcriptional regulatory protein BLD_0450 (251 aa).

This sequence belongs to the TACO1 family.

The protein resides in the cytoplasm. This Bifidobacterium longum (strain DJO10A) protein is Probable transcriptional regulatory protein BLD_0450.